Consider the following 210-residue polypeptide: Orotate phosphoribosyltransferase (210 aa).

Residues Arg94, Lys98, His100, and 120–128 (EDLISTGGS) contribute to the 5-phospho-alpha-D-ribose 1-diphosphate site. Residue Ser124 coordinates orotate.

This sequence belongs to the purine/pyrimidine phosphoribosyltransferase family. PyrE subfamily. As to quaternary structure, homodimer. It depends on Mg(2+) as a cofactor.

The catalysed reaction is orotidine 5'-phosphate + diphosphate = orotate + 5-phospho-alpha-D-ribose 1-diphosphate. Its pathway is pyrimidine metabolism; UMP biosynthesis via de novo pathway; UMP from orotate: step 1/2. Functionally, catalyzes the transfer of a ribosyl phosphate group from 5-phosphoribose 1-diphosphate to orotate, leading to the formation of orotidine monophosphate (OMP). The polypeptide is Orotate phosphoribosyltransferase (Bacillus cereus (strain ATCC 14579 / DSM 31 / CCUG 7414 / JCM 2152 / NBRC 15305 / NCIMB 9373 / NCTC 2599 / NRRL B-3711)).